The chain runs to 613 residues: Autophagy-related protein 22-2 (613 aa).

The segment at 1–28 is disordered; it reads MVLNSTPPASPGAEAQQRPPRYPGEDTA. The chain crosses the membrane as a helical span at residues 41–61; the sequence is YGIAAEVFAVCGVGSFLPLTL. Residues 80-96 are compositionally biased toward polar residues; it reads GSSSPSTAPGNGTTTAT. The interval 80–99 is disordered; it reads GSSSPSTAPGNGTTTATLRR. Asn-90 is a glycosylation site (N-linked (GlcNAc...) asparagine). Transmembrane regions (helical) follow at residues 120-140, 155-177, and 189-209; these read SFAM…LISF, LAFG…PVYI, and CLGS…ANDP. Residues 216–257 are disordered; the sequence is KEEGEELSPVNSSGEFARSEDLDEENVRDSDDHFTTGHGLKT. Residue Asn-226 is glycosylated (N-linked (GlcNAc...) asparagine). Over residues 232–250 the composition is skewed to basic and acidic residues; it reads ARSEDLDEENVRDSDDHFT. Helical transmembrane passes span 278 to 298, 307 to 327, 382 to 402, and 418 to 438; these read VGLG…MLFA, ISGT…WFSF, VIVF…VSGT, and VGLL…LWPV. The N-linked (GlcNAc...) asparagine glycan is linked to Asn-448. 4 helical membrane-spanning segments follow: residues 453–473, 488–510, 522–544, and 553–573; these read LCIA…IPLF, FPLG…SFFG, YALY…GMLI, and GFFF…MVNA. Residues 592-613 are disordered; that stretch reads GEHASEYGGPSEEAEGLLARDI.

The protein belongs to the ATG22 family.

The protein localises to the vacuole membrane. Its function is as follows. Vacuolar effluxer which mediate the efflux of amino acids resulting from autophagic degradation. The release of autophagic amino acids allows the maintenance of protein synthesis and viability during nitrogen starvation. In Neosartorya fischeri (strain ATCC 1020 / DSM 3700 / CBS 544.65 / FGSC A1164 / JCM 1740 / NRRL 181 / WB 181) (Aspergillus fischerianus), this protein is Autophagy-related protein 22-2 (atg22-2).